Here is a 112-residue protein sequence, read N- to C-terminus: Putative pterin-4-alpha-carbinolamine dehydratase (112 aa).

Belongs to the pterin-4-alpha-carbinolamine dehydratase family.

The catalysed reaction is (4aS,6R)-4a-hydroxy-L-erythro-5,6,7,8-tetrahydrobiopterin = (6R)-L-erythro-6,7-dihydrobiopterin + H2O. The polypeptide is Putative pterin-4-alpha-carbinolamine dehydratase (Photobacterium profundum (strain SS9)).